Reading from the N-terminus, the 388-residue chain is MNLHEYQGKQLFAEYGLPVSKGFAVDTPEEAAEACDKIGGGEWVVKAQVHAGGRGKAGGVKLVKSKEDAKAFAQQWLGKNLVTYQTDANGQPVSKILVESCTDIDKELYLGAVVDRSSRRIVFMASTEGGVDIEKVAHDTPEKILKATIDPLVGAQPYQGRELAFQLGLKGDQIKQFTHIFVGLAKLFQDYDLALLEVNPLVIKKDGNLHCLDAKINIDSNALYRQPKLRAMHDPSQDDAREAHAQKWELNYVALEGNIGCMVNGAGLAMGTMDIVNLHGGKPANFLDVGGGATKERVTEAFKIILSDSNVKAVLVNIFGGIVRCDMIAEGIIGAVKEVGVKVPVVVRLEGNNAELGAKVLAESGLNIIAATSLTDAAQQVVKAAEGK.

The ATP-grasp domain occupies 9–244; it reads KQLFAEYGLP…PSQDDAREAH (236 aa). ATP contacts are provided by residues Lys46, 53 to 55, Glu99, Thr102, and Glu107; that span reads GRG. 2 residues coordinate Mg(2+): Asn199 and Asp213. Substrate is bound by residues Asn264 and 321-323; that span reads GIV.

It belongs to the succinate/malate CoA ligase beta subunit family. Heterotetramer of two alpha and two beta subunits. The cofactor is Mg(2+).

It catalyses the reaction succinate + ATP + CoA = succinyl-CoA + ADP + phosphate. It carries out the reaction GTP + succinate + CoA = succinyl-CoA + GDP + phosphate. It participates in carbohydrate metabolism; tricarboxylic acid cycle; succinate from succinyl-CoA (ligase route): step 1/1. In terms of biological role, succinyl-CoA synthetase functions in the citric acid cycle (TCA), coupling the hydrolysis of succinyl-CoA to the synthesis of either ATP or GTP and thus represents the only step of substrate-level phosphorylation in the TCA. The beta subunit provides nucleotide specificity of the enzyme and binds the substrate succinate, while the binding sites for coenzyme A and phosphate are found in the alpha subunit. The protein is Succinate--CoA ligase [ADP-forming] subunit beta of Pseudomonas paraeruginosa (strain DSM 24068 / PA7) (Pseudomonas aeruginosa (strain PA7)).